Here is a 554-residue protein sequence, read N- to C-terminus: HMG box-containing protein 4 (554 aa).

Disordered regions lie at residues 14–34 (RGMEDVGLAAGRSQREKKRSY), 47–368 (QVRK…SAYQ), and 418–468 (HKQN…SPAK). Positions 117-127 (TSPQVDTSTTH) are enriched in polar residues. Residues 221–230 (TGREETESRS) are compositionally biased toward basic and acidic residues. The segment covering 242-255 (PRSGGTPDSASSTG) has biased composition (polar residues). Over residues 272 to 300 (MKKKKKSKKSKKKKDKHKDEKHRKHSKSK) the composition is skewed to basic residues. The segment covering 317–335 (LPSPPPPTATTPTSPPSVP) has biased composition (pro residues). The span at 342–358 (HAEEQLDKKKKKEDPEK) shows a compositional bias: basic and acidic residues. Residues 360 to 428 (KKKNMSAYQV…KQNKAEATTV (69 aa)) constitute a DNA-binding region (HMG box). Residues 434–466 (SSESAARSKGSSSGLPSPNKKSPTSVVSFSTSP) show a composition bias toward low complexity.

In terms of assembly, interacts with nlk.2.

It is found in the nucleus. In terms of biological role, negatively regulates Wnt/beta-catenin signaling during development. In Xenopus tropicalis (Western clawed frog), this protein is HMG box-containing protein 4 (hmgxb4).